Consider the following 241-residue polypeptide: C-type lectin domain family 9 member A (241 aa).

Topologically, residues 1-34 (MHEEEIYTSLQWDIPTSEASQKCPSLSKCPGTWC) are cytoplasmic. Positions 5-10 (EIYTSL) match the ITAM-like motif. A helical; Signal-anchor for type II membrane protein transmembrane segment spans residues 35 to 55 (IVTVISCVVCVGLLAASIFLG). Residues 56–241 (IKFSQVSSLV…CEKKAFGSCI (186 aa)) are Extracellular-facing. N-linked (GlcNAc...) asparagine glycans are attached at residues Asn81 and Asn88. A disulfide bridge connects residues Cys113 and Cys124. The C-type lectin domain occupies 120-233 (NGKSCYYAFD…CSNWKYFICE (114 aa)). N-linked (GlcNAc...) asparagine glycans are attached at residues Asn135, Asn161, and Asn223. 2 cysteine pairs are disulfide-bonded: Cys141/Cys232 and Cys211/Cys224.

As to quaternary structure, homodimer. Post-translationally, N-glycosylated. High expression in the spleen, moderate to low levels in several other tissues and cell types, but no detectable expression in skin dendritic cells or CD4(+) T-cells.

It localises to the membrane. In terms of biological role, functions as an endocytic receptor on a small subset of myeloid cells specialized for the uptake and processing of material from dead cells. Recognizes filamentous form of actin in association with particular actin-binding domains of cytoskeletal proteins, including spectrin, exposed when cell membranes are damaged, and mediate the cross-presentation of dead-cell associated antigens in a Syk-dependent manner. The chain is C-type lectin domain family 9 member A (Clec9a) from Rattus norvegicus (Rat).